A 255-amino-acid polypeptide reads, in one-letter code: DNA repair protein RecO (255 aa).

This sequence belongs to the RecO family.

Involved in DNA repair and RecF pathway recombination. The sequence is that of DNA repair protein RecO from Bacillus velezensis (strain DSM 23117 / BGSC 10A6 / LMG 26770 / FZB42) (Bacillus amyloliquefaciens subsp. plantarum).